A 201-amino-acid chain; its full sequence is Phosphoheptose isomerase 2 (201 aa).

The SIS domain occupies 39–198 (VIKAYKNGNK…EEELFGKGFS (160 aa)). Residue 54–56 (NGG) participates in substrate binding. Positions 63 and 67 each coordinate Zn(2+). Substrate contacts are provided by residues E67, 96 to 97 (ND), 122 to 124 (STS), S127, and Q174. The Zn(2+) site is built by Q174 and H182.

The protein belongs to the SIS family. GmhA subfamily. Homotetramer. The cofactor is Zn(2+).

It localises to the cytoplasm. The enzyme catalyses 2 D-sedoheptulose 7-phosphate = D-glycero-alpha-D-manno-heptose 7-phosphate + D-glycero-beta-D-manno-heptose 7-phosphate. It functions in the pathway carbohydrate biosynthesis; D-glycero-D-manno-heptose 7-phosphate biosynthesis; D-glycero-alpha-D-manno-heptose 7-phosphate and D-glycero-beta-D-manno-heptose 7-phosphate from sedoheptulose 7-phosphate: step 1/1. The protein operates within capsule biogenesis; capsule polysaccharide biosynthesis. Functionally, catalyzes the isomerization of sedoheptulose 7-phosphate in D-glycero-D-manno-heptose 7-phosphate. No activity with L-galacto-heptulose, L-galacto-heptulose 7-phosphate or D-manno-heptulose. This is Phosphoheptose isomerase 2 from Campylobacter jejuni subsp. jejuni serotype O:2 (strain ATCC 700819 / NCTC 11168).